We begin with the raw amino-acid sequence, 302 residues long: Ribosomal RNA small subunit methyltransferase H (302 aa).

Residues 43–45 (GGH), Asp-62, Phe-89, Asp-105, and His-112 each bind S-adenosyl-L-methionine. Residues 276-302 (EIANNPRSRSAKLRIAEKQAETGDEDN) form a disordered region.

Belongs to the methyltransferase superfamily. RsmH family.

The protein localises to the cytoplasm. It catalyses the reaction cytidine(1402) in 16S rRNA + S-adenosyl-L-methionine = N(4)-methylcytidine(1402) in 16S rRNA + S-adenosyl-L-homocysteine + H(+). In terms of biological role, specifically methylates the N4 position of cytidine in position 1402 (C1402) of 16S rRNA. This chain is Ribosomal RNA small subunit methyltransferase H, found in Nostoc sp. (strain PCC 7120 / SAG 25.82 / UTEX 2576).